Consider the following 199-residue polypeptide: 3-isopropylmalate dehydratase small subunit (199 aa).

It belongs to the LeuD family. LeuD type 1 subfamily. As to quaternary structure, heterodimer of LeuC and LeuD.

The catalysed reaction is (2R,3S)-3-isopropylmalate = (2S)-2-isopropylmalate. Its pathway is amino-acid biosynthesis; L-leucine biosynthesis; L-leucine from 3-methyl-2-oxobutanoate: step 2/4. Functionally, catalyzes the isomerization between 2-isopropylmalate and 3-isopropylmalate, via the formation of 2-isopropylmaleate. The protein is 3-isopropylmalate dehydratase small subunit of Mycobacteroides abscessus (strain ATCC 19977 / DSM 44196 / CCUG 20993 / CIP 104536 / JCM 13569 / NCTC 13031 / TMC 1543 / L948) (Mycobacterium abscessus).